The sequence spans 313 residues: Fe-S cluster assembly protein dre2 (313 aa).

Disordered regions lie at residues 1 to 25 (MSIT…SQKR) and 151 to 187 (GRKK…AQNN). The N-terminal SAM-like domain stretch occupies residues 20–145 (NGSQKRNLLL…FEKPVQEAAV (126 aa)). The tract at residues 146–203 (PLKLGGRKKKDKTNGVNGVQNGVATNGASTNGVGMFDPAQNNDDELIDEDALLSDDDL) is linker. Residues 159–177 (NGVNGVQNGVATNGASTNG) are compositionally biased toward polar residues. Residues Cys-213, Cys-225, Cys-228, and Cys-230 each coordinate [2Fe-2S] cluster. A fe-S binding site A region spans residues 213-230 (CVPETAKKRRRPCKDCTC). [4Fe-4S] cluster is bound by residues Cys-276, Cys-279, Cys-287, and Cys-290. 2 consecutive short sequence motifs (cx2C motif) follow at residues 276-279 (CNSC) and 287-290 (CSSC). Positions 276–290 (CNSCSLGDAFRCSSC) are fe-S binding site B.

The protein belongs to the anamorsin family. As to quaternary structure, monomer. Interacts with tah18. Interacts with mia40. [2Fe-2S] cluster serves as cofactor. The cofactor is [4Fe-4S] cluster.

It is found in the cytoplasm. Its subcellular location is the mitochondrion intermembrane space. Functionally, component of the cytosolic iron-sulfur (Fe-S) protein assembly (CIA) machinery required for the maturation of extramitochondrial Fe-S proteins. Part of an electron transfer chain functioning in an early step of cytosolic Fe-S biogenesis, facilitating the de novo assembly of a [4Fe-4S] cluster on the scaffold complex cfd1-nbp35. Electrons are transferred to dre2 from NADPH via the FAD- and FMN-containing protein tah18. Tah18-dre2 are also required for the assembly of the diferric tyrosyl radical cofactor of ribonucleotide reductase (RNR), probably by providing electrons for reduction during radical cofactor maturation in the catalytic small subunit rnr2. This chain is Fe-S cluster assembly protein dre2, found in Aspergillus flavus (strain ATCC 200026 / FGSC A1120 / IAM 13836 / NRRL 3357 / JCM 12722 / SRRC 167).